The chain runs to 154 residues: 6,7-dimethyl-8-ribityllumazine synthase (154 aa).

5-amino-6-(D-ribitylamino)uracil-binding positions include Trp22, 56-58 (AWE), and 80-82 (CVI). 85–86 (DT) contacts (2S)-2-hydroxy-3-oxobutyl phosphate. His88 functions as the Proton donor in the catalytic mechanism. Asn113 lines the 5-amino-6-(D-ribitylamino)uracil pocket. Arg127 serves as a coordination point for (2S)-2-hydroxy-3-oxobutyl phosphate.

It belongs to the DMRL synthase family. In terms of assembly, forms an icosahedral capsid composed of 60 subunits, arranged as a dodecamer of pentamers.

The catalysed reaction is (2S)-2-hydroxy-3-oxobutyl phosphate + 5-amino-6-(D-ribitylamino)uracil = 6,7-dimethyl-8-(1-D-ribityl)lumazine + phosphate + 2 H2O + H(+). Its pathway is cofactor biosynthesis; riboflavin biosynthesis; riboflavin from 2-hydroxy-3-oxobutyl phosphate and 5-amino-6-(D-ribitylamino)uracil: step 1/2. Its function is as follows. Catalyzes the formation of 6,7-dimethyl-8-ribityllumazine by condensation of 5-amino-6-(D-ribitylamino)uracil with 3,4-dihydroxy-2-butanone 4-phosphate. This is the penultimate step in the biosynthesis of riboflavin. In Xanthomonas axonopodis pv. citri (strain 306), this protein is 6,7-dimethyl-8-ribityllumazine synthase.